The following is a 109-amino-acid chain: MTLKLIWDKFYVSIIFVITCLVLGIILMCTVIGSGSEYSEVDVNEGDSIWALADQYAAKSDMAKADFVSWVEKENNLTDGHVKAGDYVVIPVHETKLQRSDSTIQLANQ.

Residues 39–90 (SEVDVNEGDSIWALADQYAAKSDMAKADFVSWVEKENNLTDGHVKAGDYVVI) form the LysM domain.

The protein belongs to the YneA family.

It is found in the cytoplasm. Its function is as follows. Inhibits cell division during the SOS response. Affects a later stage of the cell division protein assembly, after the assembly of the Z ring, by probably suppressing recruitment of FtsL and/or DivIC to the division machinery. The sequence is that of Cell division suppressor protein YneA from Listeria innocua serovar 6a (strain ATCC BAA-680 / CLIP 11262).